The chain runs to 456 residues: Heme sensor protein HssS (456 aa).

Transmembrane regions (helical) follow at residues 9–29 and 164–184; these read IAIYTITVILFSALVSFLFAN and TFLAVLLICLLGISITLVIAS. In terms of domain architecture, HAMP spans 186–238; that stretch reads YSIIKPIKILKQATERLMHGDFNSPIYQSRHDEIGTLQYRFEAMRQSLKQVDD. In terms of domain architecture, Histidine kinase spans 246–456; sequence NVSHEIKTPL…TFTVTLPETN (211 aa). The residue at position 249 (His-249) is a Phosphohistidine; by autocatalysis.

In terms of processing, autophosphorylated.

The protein localises to the cell membrane. The enzyme catalyses ATP + protein L-histidine = ADP + protein N-phospho-L-histidine.. Member of the two-component regulatory system HssS/HssR involved in intracellular heme homeostasis and tempering of staphylococcal virulence. HssS functions as a heme sensor histidine kinase which is autophosphorylated at a histidine residue and transfers its phosphate group to an aspartate residue of HssR. HssR/HssS activates the expression of hrtAB, an efflux pump, in response to extracellular heme, hemin, hemoglobin or blood. The chain is Heme sensor protein HssS (hssS) from Staphylococcus haemolyticus (strain JCSC1435).